The primary structure comprises 630 residues: Alpha-1,4-glucan:maltose-1-phosphate maltosyltransferase (630 aa).

Residues Arg-234, Gln-294, and Asp-329 each coordinate alpha-maltose 1-phosphate. Residue Asp-365 is the Nucleophile of the active site. Asn-366 serves as a coordination point for alpha-maltose 1-phosphate. Glu-394 functions as the Proton donor in the catalytic mechanism. 504–505 contacts alpha-maltose 1-phosphate; it reads KY.

This sequence belongs to the glycosyl hydrolase 13 family. GlgE subfamily. As to quaternary structure, homodimer.

The enzyme catalyses alpha-maltose 1-phosphate + [(1-&gt;4)-alpha-D-glucosyl](n) = [(1-&gt;4)-alpha-D-glucosyl](n+2) + phosphate. In terms of biological role, maltosyltransferase that uses maltose 1-phosphate (M1P) as the sugar donor to elongate linear or branched alpha-(1-&gt;4)-glucans. Is involved in a branched alpha-glucan biosynthetic pathway from trehalose, together with TreS, Mak and GlgB. This is Alpha-1,4-glucan:maltose-1-phosphate maltosyltransferase from Picrophilus torridus (strain ATCC 700027 / DSM 9790 / JCM 10055 / NBRC 100828 / KAW 2/3).